A 675-amino-acid chain; its full sequence is NADH-ubiquinone oxidoreductase 75 kDa subunit (675 aa).

Positions 2-80 (KNISFKVNDF…SMNIYTNTLK (79 aa)) constitute a 2Fe-2S ferredoxin-type domain. The [2Fe-2S] cluster site is built by Cys36, Cys47, Cys50, and Cys64. The region spanning 80–119 (KVKKARESVLEFLLANHPLDCPICDQGGECDLQDQSVVFG) is the 4Fe-4S His(Cys)3-ligated-type domain. [4Fe-4S] cluster-binding residues include His96, Cys100, Cys103, Cys109, Cys148, Cys151, Cys154, and Cys198. Positions 217–273 (LKSYNSIDVLDSLHSNIRVDIRGTKIMRILPRVNSELNEDWITDKIRFSYDSFRRQR) constitute a 4Fe-4S Mo/W bis-MGD-type domain.

This sequence belongs to the complex I 75 kDa subunit family. As to quaternary structure, complex I is composed of about 30 different subunits. The cofactor is [2Fe-2S] cluster. Requires [4Fe-4S] cluster as cofactor.

It is found in the mitochondrion inner membrane. It carries out the reaction a ubiquinone + NADH + 5 H(+)(in) = a ubiquinol + NAD(+) + 4 H(+)(out). Its function is as follows. Core subunit of the mitochondrial membrane respiratory chain NADH dehydrogenase (Complex I) that is believed to belong to the minimal assembly required for catalysis. Complex I functions in the transfer of electrons from NADH to the respiratory chain. The immediate electron acceptor for the enzyme is believed to be ubiquinone. This is the largest subunit of complex I and it is a component of the iron-sulfur (IP) fragment of the enzyme. It may form part of the active site crevice where NADH is oxidized. The polypeptide is NADH-ubiquinone oxidoreductase 75 kDa subunit (NAD11) (Acanthamoeba castellanii (Amoeba)).